A 130-amino-acid polypeptide reads, in one-letter code: Large ribosomal subunit protein bL17 (130 aa).

This sequence belongs to the bacterial ribosomal protein bL17 family. As to quaternary structure, part of the 50S ribosomal subunit. Contacts protein L32.

This is Large ribosomal subunit protein bL17 from Shewanella pealeana (strain ATCC 700345 / ANG-SQ1).